The chain runs to 112 residues: UPF0342 protein SPH_1504 (112 aa).

The protein belongs to the UPF0342 family.

The protein is UPF0342 protein SPH_1504 of Streptococcus pneumoniae (strain Hungary19A-6).